Consider the following 564-residue polypeptide: Bifunctional sesquiterpene synthase 1 (564 aa).

The Mg(2+) site is built by D317, D321, D461, and E469. The DDXXD motif motif lies at 317–321 (DDTFD).

The protein belongs to the terpene synthase family. The cofactor is Mg(2+).

It catalyses the reaction (2E,6E)-farnesyl diphosphate = alpha-copaene + diphosphate. The enzyme catalyses (2E,6E)-farnesyl diphosphate = delta-cadinene + diphosphate. It participates in secondary metabolite biosynthesis; terpenoid biosynthesis. Sesquiterpene synthase converting farnesyl diphosphate to alpha copaene and delta-cadinene as the major products. This is Bifunctional sesquiterpene synthase 1 from Phyla dulcis (Aztec sweet herb).